Reading from the N-terminus, the 224-residue chain is Urease accessory protein UreF 2 (224 aa).

This sequence belongs to the UreF family. In terms of assembly, ureD, UreF and UreG form a complex that acts as a GTP-hydrolysis-dependent molecular chaperone, activating the urease apoprotein by helping to assemble the nickel containing metallocenter of UreC. The UreE protein probably delivers the nickel.

Its subcellular location is the cytoplasm. In terms of biological role, required for maturation of urease via the functional incorporation of the urease nickel metallocenter. This Pseudomonas syringae pv. tomato (strain ATCC BAA-871 / DC3000) protein is Urease accessory protein UreF 2.